Reading from the N-terminus, the 152-residue chain is UPF0178 protein NIS_0137 (152 aa).

Belongs to the UPF0178 family.

This Nitratiruptor sp. (strain SB155-2) protein is UPF0178 protein NIS_0137.